Consider the following 167-residue polypeptide: SAR-endolysin (167 aa).

Residues 10 to 32 (SVMAAISGGAIAIASVLITGPGG) traverse the membrane as a helical; Signal-anchor for type II membrane protein segment. Active-site proton donor/acceptor residues include glutamate 37 and aspartate 46.

The protein belongs to the glycosyl hydrolase 24 family.

Its subcellular location is the host cell inner membrane. The catalysed reaction is Hydrolysis of (1-&gt;4)-beta-linkages between N-acetylmuramic acid and N-acetyl-D-glucosamine residues in a peptidoglycan and between N-acetyl-D-glucosamine residues in chitodextrins.. Functionally, signal-arrest-release (SAR) endolysin with lysozyme activity that degrades host peptidoglycans and participates with the pinholin and spanin proteins in the sequential events which lead to programmed host cell lysis releasing the mature viral particles. Once the pinholin has permeabilized the host cell membrane, the SAR-endolysin is released into the periplasm where it breaks down the peptidoglycan layer. This Bacteriophage PS119 protein is SAR-endolysin (19).